We begin with the raw amino-acid sequence, 84 residues long: Dolichol phosphate-mannose biosynthesis regulatory protein (84 aa).

Transmembrane regions (helical) follow at residues 11–31 (FGLV…VILL) and 49–69 (YAVL…GLFI).

It belongs to the DPM2 family. Component of the dolichol-phosphate mannose (DPM) synthase complex composed of DPM1, DPM2 and DPM3; in the complex interacts directly with DPM3. Component of the glycosylphosphatidylinositol-N-acetylglucosaminyltransferase (GPI-GnT) complex composed at least by PIGA, PIGC, PIGH, PIGP, PIGQ, PIGY and DPM2. Interacts with PIGA, PIGC and PIGQ.

The protein resides in the endoplasmic reticulum membrane. Its pathway is protein modification; protein glycosylation. Regulates the biosynthesis of dolichol phosphate-mannose. Regulatory subunit of the dolichol-phosphate mannose (DPM) synthase complex; essential for the ER localization and stable expression of DPM1. Part of the glycosylphosphatidylinositol-N-acetylglucosaminyltransferase (GPI-GnT) complex that catalyzes the transfer of N-acetylglucosamine from UDP-N-acetylglucosamine to phosphatidylinositol and participates in the first step of GPI biosynthesis. May act by regulating the GPI-GNT complex. This Rattus norvegicus (Rat) protein is Dolichol phosphate-mannose biosynthesis regulatory protein.